A 429-amino-acid polypeptide reads, in one-letter code: Apolipoprotein A-IV (429 aa).

An N-terminal signal peptide occupies residues 1–20 (MFLKAVVLTLALVAVTGARA). Repeat copies occupy residues 33-54 (DYFS…KSEL), 60-81 (ALFQ…KKLV), 82-103 (PFAT…EEIR), 115-136 (PHAN…QRLE), 137-158 (PYTD…RQLT), 159-180 (PYAQ…TSLR), 181-202 (PHAD…ERLT), 203-224 (PYAD…RSLA), 225-246 (PYAQ…FQMK), 247-268 (KNAE…QRLA), 269-286 (PLAE…EGLQ), 287-308 (KSLA…LRVE), and 309-330 (PYGE…QKLG). The segment at 33 to 330 (DYFSQLSSNA…QMEQLRQKLG (298 aa)) is 13 X 22 AA approximate tandem repeats. The tract at residues 359-429 (KEKESQDNTL…QVQMLAPLES (71 aa)) is disordered. Residues 381-420 (QEQQQEQEQEQQQQQEQQQQQEQQREQQQQEQQQEQQQEQ) are compositionally biased toward low complexity.

The protein belongs to the apolipoprotein A1/A4/E family. In terms of assembly, homodimer. In terms of processing, phosphorylation sites are present in the extracellular medium. As to expression, secreted in plasma.

Its subcellular location is the secreted. Its function is as follows. May have a role in chylomicrons and VLDL secretion and catabolism. Required for efficient activation of lipoprotein lipase by ApoC-II; potent activator of LCAT. Apoa-IV is a major component of HDL and chylomicrons. In Macaca fascicularis (Crab-eating macaque), this protein is Apolipoprotein A-IV (APOA4).